The chain runs to 205 residues: Proteasome subunit beta type-3 (205 aa).

It belongs to the peptidase T1B family. The 26S proteasome consists of a 20S proteasome core and two 19S regulatory subunits. The 20S proteasome core is composed of 28 subunits that are arranged in four stacked rings, resulting in a barrel-shaped structure. The two end rings are each formed by seven alpha subunits, and the two central rings are each formed by seven beta subunits. The catalytic chamber with the active sites is on the inside of the barrel.

It is found in the cytoplasm. Its subcellular location is the nucleus. In terms of biological role, non-catalytic component of the proteasome, a multicatalytic proteinase complex which is characterized by its ability to cleave peptides with Arg, Phe, Tyr, Leu, and Glu adjacent to the leaving group at neutral or slightly basic pH. The proteasome has an ATP-dependent proteolytic activity. This Dictyostelium discoideum (Social amoeba) protein is Proteasome subunit beta type-3 (psmB3).